Reading from the N-terminus, the 200-residue chain is Charged multivesicular body protein 6-B (200 aa).

The N-myristoyl glycine moiety is linked to residue Gly-2. Residues 9–102 (RRSRVTEQDK…FAQIEMKVIE (94 aa)) are a coiled coil. Residues 165–200 (QEDLELPEAPSEPLSDTVPEKQAVKNRPKPQLVAAS) form a disordered region. A Type-2 MIT-interacting motif motif is present at residues 168 to 179 (LELPEAPSEPLS).

It belongs to the SNF7 family. In terms of assembly, probable core component of the endosomal sorting required for transport complex III (ESCRT-III). ESCRT-III components are thought to multimerize to form a flat lattice on the perimeter membrane of the endosome.

It localises to the endomembrane system. Its subcellular location is the late endosome membrane. In terms of biological role, probable core component of the endosomal sorting required for transport complex III (ESCRT-III) which is involved in multivesicular bodies (MVBs) formation and sorting of endosomal cargo proteins into MVBs. MVBs contain intraluminal vesicles (ILVs) that are generated by invagination and scission from the limiting membrane of the endosome and mostly are delivered to lysosomes enabling degradation of membrane proteins, such as stimulated growth factor receptors, lysosomal enzymes and lipids. In the ESCRT-III complex, it probably serves as an acceptor for the ESCRT-II complex on endosomal membranes. This is Charged multivesicular body protein 6-B (chmp6-b) from Xenopus laevis (African clawed frog).